The sequence spans 904 residues: MSATTVSQFAVELKMPVVALLEQLGKAGVGKSDANDMLNDQDKTRLLDYLRRAHGDESQTKITLTRKQTSEIKATDSHGRARTVQVEVRKKRVLVKRDIGEHAPEVELEASNALQEEVSAPEVIPEPVVEVVPEPVIEVVPEPVVEIVPEPVVEAPVEVPVEEVVLEKAAPVAPTRASIIGEKELQARAEESRRYNQLREIQERELREKQAREAQLVQMRQQAELAAAAAKAAELAKNQAATQAKTSEGAEKGTLHKKPETPGKKGDKGGRAADDGKKKGGIKTRGSDGAGGWKDNRHGHKKSHKVDDGQGSFQAPTEPVVREVHIPETISVSDLAHKMAIKATEIIKVMMKMGSMVTINQVLDQETAMIVVEEMGHQALAAKLDDPDAFLEEHAEHKDVPLEHRAPVVTVMGHVDHGKTSLLDYIRRAKVASGEAGGITQHIGAYHVETDRGMVTFLDTPGHEAFTAMRARGAKATDIVILVVAADDGVMPQTKEAIHHAKAAGVPLVVAVNKIDKPDANPERVKQELVAEGVIPEEYGGDSPFVPVSAKKGTGIDELLEQVLLQAEILELTAQKDAPAKGLIIEARLDKGRGAVATMLVQSGTLKRGDIVLAGQVFGRVRAMLDENGKPINEAGPSIPVEILGLSDVPAAGEEAIVLGDEKKAREIALFRQGKFRDVKLAKQQAAKLENMFQQMEEGEVKTLPLIVKADVQGSQEALVQTLSKLSNEEVRVQIIHGAVGAISESDVNLAQASGAVIIGFNIRADAGSRKLAESFGVDIRYYNVIYDAVDEVKAALSGMLSPEKREQITGMVEIRQVFLVSKVGAIAGCYVLEGFVKRNSRVRLLRNNVVQWDGELDSLKRFKDDVKEVRSNFECGLSLRGNNDIQVGDQLEVYEIQEVARSL.

Residues 239-316 (QAATQAKTSE…DDGQGSFQAP (78 aa)) are disordered. Positions 248 to 278 (EGAEKGTLHKKPETPGKKGDKGGRAADDGKK) are enriched in basic and acidic residues. The 168-residue stretch at 404-571 (HRAPVVTVMG…QVLLQAEILE (168 aa)) folds into the tr-type G domain. Residues 413-420 (GHVDHGKT) are G1. Residue 413 to 420 (GHVDHGKT) coordinates GTP. Residues 438–442 (GITQH) are G2. The tract at residues 459–462 (DTPG) is G3. GTP contacts are provided by residues 459–463 (DTPGH) and 513–516 (NKID). The segment at 513–516 (NKID) is G4. The tract at residues 549–551 (SAK) is G5.

The protein belongs to the TRAFAC class translation factor GTPase superfamily. Classic translation factor GTPase family. IF-2 subfamily.

Its subcellular location is the cytoplasm. One of the essential components for the initiation of protein synthesis. Protects formylmethionyl-tRNA from spontaneous hydrolysis and promotes its binding to the 30S ribosomal subunits. Also involved in the hydrolysis of GTP during the formation of the 70S ribosomal complex. The protein is Translation initiation factor IF-2 of Dechloromonas aromatica (strain RCB).